The sequence spans 206 residues: Urease accessory protein UreG (206 aa).

13–20 contributes to the GTP binding site; sequence GPVGSGKT.

This sequence belongs to the SIMIBI class G3E GTPase family. UreG subfamily. As to quaternary structure, homodimer. UreD, UreF and UreG form a complex that acts as a GTP-hydrolysis-dependent molecular chaperone, activating the urease apoprotein by helping to assemble the nickel containing metallocenter of UreC. The UreE protein probably delivers the nickel.

Its subcellular location is the cytoplasm. Its function is as follows. Facilitates the functional incorporation of the urease nickel metallocenter. This process requires GTP hydrolysis, probably effectuated by UreG. The sequence is that of Urease accessory protein UreG from Natronomonas pharaonis (strain ATCC 35678 / DSM 2160 / CIP 103997 / JCM 8858 / NBRC 14720 / NCIMB 2260 / Gabara) (Halobacterium pharaonis).